Consider the following 252-residue polypeptide: Phosphoglycolate phosphatase (252 aa).

Catalysis depends on aspartate 13, which acts as the Nucleophile. Positions 13, 15, and 192 each coordinate Mg(2+).

The protein belongs to the HAD-like hydrolase superfamily. CbbY/CbbZ/Gph/YieH family. Monomer. It depends on Mg(2+) as a cofactor. Chloride serves as cofactor.

The enzyme catalyses 2-phosphoglycolate + H2O = glycolate + phosphate. The protein operates within organic acid metabolism; glycolate biosynthesis; glycolate from 2-phosphoglycolate: step 1/1. Its function is as follows. Specifically catalyzes the dephosphorylation of 2-phosphoglycolate. Is involved in the dissimilation of the intracellular 2-phosphoglycolate formed during the DNA repair of 3'-phosphoglycolate ends, a major class of DNA lesions induced by oxidative stress. The polypeptide is Phosphoglycolate phosphatase (Escherichia coli O157:H7).